The following is a 457-amino-acid chain: Siroheme synthase (457 aa).

Positions 1 to 204 (MDHLPIFCQL…NDQKAITETT (204 aa)) are precorrin-2 dehydrogenase /sirohydrochlorin ferrochelatase. Residues 22-23 (DV) and 43-44 (LA) each bind NAD(+). S128 is subject to Phosphoserine. The uroporphyrinogen-III C-methyltransferase stretch occupies residues 216-457 (GEVVLVGAGP…RDKLNWFSNH (242 aa)). P225 contacts S-adenosyl-L-methionine. The Proton acceptor role is filled by D248. Catalysis depends on K270, which acts as the Proton donor. S-adenosyl-L-methionine contacts are provided by residues 301 to 303 (GGD), I306, 331 to 332 (TA), M382, and G411.

The protein in the N-terminal section; belongs to the precorrin-2 dehydrogenase / sirohydrochlorin ferrochelatase family. This sequence in the C-terminal section; belongs to the precorrin methyltransferase family.

It catalyses the reaction uroporphyrinogen III + 2 S-adenosyl-L-methionine = precorrin-2 + 2 S-adenosyl-L-homocysteine + H(+). The enzyme catalyses precorrin-2 + NAD(+) = sirohydrochlorin + NADH + 2 H(+). It carries out the reaction siroheme + 2 H(+) = sirohydrochlorin + Fe(2+). It participates in cofactor biosynthesis; adenosylcobalamin biosynthesis; precorrin-2 from uroporphyrinogen III: step 1/1. Its pathway is cofactor biosynthesis; adenosylcobalamin biosynthesis; sirohydrochlorin from precorrin-2: step 1/1. It functions in the pathway porphyrin-containing compound metabolism; siroheme biosynthesis; precorrin-2 from uroporphyrinogen III: step 1/1. The protein operates within porphyrin-containing compound metabolism; siroheme biosynthesis; siroheme from sirohydrochlorin: step 1/1. It participates in porphyrin-containing compound metabolism; siroheme biosynthesis; sirohydrochlorin from precorrin-2: step 1/1. Its function is as follows. Multifunctional enzyme that catalyzes the SAM-dependent methylations of uroporphyrinogen III at position C-2 and C-7 to form precorrin-2 via precorrin-1. Then it catalyzes the NAD-dependent ring dehydrogenation of precorrin-2 to yield sirohydrochlorin. Finally, it catalyzes the ferrochelation of sirohydrochlorin to yield siroheme. In Escherichia coli O157:H7 (strain EC4115 / EHEC), this protein is Siroheme synthase.